The primary structure comprises 122 residues: Acidic phospholipase A2 BlatPLA2 (122 aa).

7 cysteine pairs are disulfide-bonded: Cys26–Cys115, Cys28–Cys44, Cys43–Cys95, Cys49–Cys122, Cys50–Cys88, Cys57–Cys81, and Cys75–Cys86. Positions 27, 29, and 31 each coordinate Ca(2+). His47 is an active-site residue. Asp48 provides a ligand contact to Ca(2+). Residue Asp89 is part of the active site.

It belongs to the phospholipase A2 family. Group II subfamily. D49 sub-subfamily. In terms of assembly, monomer. The cofactor is Ca(2+). Expressed by the venom gland.

Its subcellular location is the secreted. The catalysed reaction is a 1,2-diacyl-sn-glycero-3-phosphocholine + H2O = a 1-acyl-sn-glycero-3-phosphocholine + a fatty acid + H(+). Its function is as follows. Acidic phospholipase A2 (PLA2) that only causes a mild edema, when subcutaneously injected in the mice foot. PLA2 catalyzes the calcium-dependent hydrolysis of the 2-acyl groups in 3-sn-phosphoglycerides. The protein is Acidic phospholipase A2 BlatPLA2 of Bothriechis lateralis (Side-striped palm pitviper).